The sequence spans 389 residues: Serpin B13 (389 aa).

This sequence belongs to the serpin family. Ov-serpin subfamily.

It localises to the cytoplasm. May play a role in the proliferation or differentiation of keratinocytes. In Mus musculus (Mouse), this protein is Serpin B13 (Serpinb13).